Consider the following 513-residue polypeptide: tRNA A64-2'-O-ribosylphosphate transferase (513 aa).

Its function is as follows. tRNA backbone modifying enzyme that mediates initiator/ elongator tRNA discrimination. This enzyme modifies exclusively the initiator tRNA in position 64 using 5'-phosphoribosyl-1'-pyrophosphate as the modification donor. Recognize the stem-loop IV region that is unique in eukaryotic cytoplasmic initiator tRNAs. The protein is tRNA A64-2'-O-ribosylphosphate transferase (RIT1) of Saccharomyces cerevisiae (strain ATCC 204508 / S288c) (Baker's yeast).